The sequence spans 251 residues: Hydroxyacylglutathione hydrolase (251 aa).

H59, H61, D63, H64, H118, D141, and H179 together coordinate Zn(2+).

Belongs to the metallo-beta-lactamase superfamily. Glyoxalase II family. Monomer. It depends on Zn(2+) as a cofactor.

The catalysed reaction is an S-(2-hydroxyacyl)glutathione + H2O = a 2-hydroxy carboxylate + glutathione + H(+). It functions in the pathway secondary metabolite metabolism; methylglyoxal degradation; (R)-lactate from methylglyoxal: step 2/2. Its function is as follows. Thiolesterase that catalyzes the hydrolysis of S-D-lactoyl-glutathione to form glutathione and D-lactic acid. This Prochlorococcus marinus (strain NATL1A) protein is Hydroxyacylglutathione hydrolase.